Here is a 287-residue protein sequence, read N- to C-terminus: Co-chaperone protein DjlA (287 aa).

Over 1–6 (MQIFGK) the chain is Periplasmic. A helical transmembrane segment spans residues 7 to 30 (ILGAFFGFLFGGVFGALFGLFIGH). The Cytoplasmic portion of the chain corresponds to 31–287 (QFDKARRLSQ…DLIKKEKGFK (257 aa)). The disordered stretch occupies residues 192-213 (GGFGGQQHQSHHSSSHGGWQQA). Residues 221-287 (DAYKILGIDA…DLIKKEKGFK (67 aa)) form the J domain.

Homodimer.

Its subcellular location is the cell inner membrane. Functionally, regulatory DnaK co-chaperone. Direct interaction between DnaK and DjlA is needed for the induction of the wcaABCDE operon, involved in the synthesis of a colanic acid polysaccharide capsule, possibly through activation of the RcsB/RcsC phosphotransfer signaling pathway. The colanic acid capsule may help the bacterium survive conditions outside the host. This Vibrio vulnificus (strain CMCP6) protein is Co-chaperone protein DjlA.